A 609-amino-acid polypeptide reads, in one-letter code: Spore coat protein homolog 1 (609 aa).

Positions 1–17 are cleaved as a signal peptide; the sequence is MKSLLFVVFIFLTTTYA. N-linked (GlcNAc...) asparagine glycans are attached at residues Asn-82, Asn-397, and Asn-440. The segment at 527–547 is disordered; that stretch reads TVTQVPEAPGTDGTPSESTAW. Ser-584 carries the GPI-anchor amidated serine lipid modification. A propeptide spans 585-609 (removed in mature form); that stretch reads SSSIKRTPCILPLVILASTLFASFF.

The protein resides in the cell membrane. May play a role in cell adhesion. The protein is Spore coat protein homolog 1 of Rhizopus delemar (strain RA 99-880 / ATCC MYA-4621 / FGSC 9543 / NRRL 43880) (Mucormycosis agent).